The chain runs to 132 residues: uncharacterized protein (132 aa).

The next 2 helical transmembrane spans lie at 44–64 (FMSF…FTFI) and 75–95 (IAMI…AMLF).

The protein resides in the cytoplasm. It is found in the membrane. This is an uncharacterized protein from Schizosaccharomyces pombe (strain 972 / ATCC 24843) (Fission yeast).